The chain runs to 96 residues: Large ribosomal subunit protein eL14 (96 aa).

This sequence belongs to the eukaryotic ribosomal protein eL14 family.

In Metallosphaera sedula (strain ATCC 51363 / DSM 5348 / JCM 9185 / NBRC 15509 / TH2), this protein is Large ribosomal subunit protein eL14.